Here is a 180-residue protein sequence, read N- to C-terminus: MDLPDVTAVQHESRQLALASSAAELHGGLCGWLSGGGADSADWLARILADSGQVAPQQGGALDQLRQATVAQLEDRDFAFELLLVEDGAPLPARTDALFDWCRAFLGGFGLAAQQRPALSEEGEEALQDLARLAQASSEDFDAADEDDTALAEIEEFVRVAVLLLHGDCVMGPRFRQRLN.

It belongs to the UPF0149 family.

This Xanthomonas euvesicatoria pv. vesicatoria (strain 85-10) (Xanthomonas campestris pv. vesicatoria) protein is UPF0149 protein XCV3523.